A 216-amino-acid polypeptide reads, in one-letter code: Minor fimbrial subunit HifD (216 aa).

A signal peptide spans 1–19 (MQKTPKKLTALCHQQSTAS). Cysteine 20 is lipidated: N-palmitoyl cysteine. Cysteine 20 carries S-diacylglycerol cysteine lipidation. The disordered stretch occupies residues 159-180 (PINVDGSQANSEKAPDTGKEQN).

This sequence belongs to the fimbrial protein family.

It localises to the cell membrane. The protein localises to the fimbrium. Functionally, may be a minor structural protein required for pilus biogenesis. The protein is Minor fimbrial subunit HifD (hifD) of Haemophilus influenzae.